The chain runs to 382 residues: Lactaldehyde reductase (382 aa).

NAD(+)-binding positions include Asp38, Asn70, 97-98 (GS), 139-143 (TTAGT), Asn150, Lys161, and 180-184 (MMDGM). Positions 195, 199, 262, and 276 each coordinate Fe cation.

Belongs to the iron-containing alcohol dehydrogenase family. In terms of assembly, homodimer. It depends on Fe cation as a cofactor.

The enzyme catalyses (R)-propane-1,2-diol + NAD(+) = (R)-lactaldehyde + NADH + H(+). It catalyses the reaction (S)-propane-1,2-diol + NAD(+) = (S)-lactaldehyde + NADH + H(+). It participates in carbohydrate degradation; L-fucose degradation. The sequence is that of Lactaldehyde reductase (fucO) from Escherichia coli O157:H7.